We begin with the raw amino-acid sequence, 157 residues long: Crossover junction endodeoxyribonuclease RuvC (157 aa).

Catalysis depends on residues D7, E67, and D140. Mg(2+)-binding residues include D7, E67, and D140.

The protein belongs to the RuvC family. In terms of assembly, homodimer which binds Holliday junction (HJ) DNA. The HJ becomes 2-fold symmetrical on binding to RuvC with unstacked arms; it has a different conformation from HJ DNA in complex with RuvA. In the full resolvosome a probable DNA-RuvA(4)-RuvB(12)-RuvC(2) complex forms which resolves the HJ. The cofactor is Mg(2+).

Its subcellular location is the cytoplasm. The enzyme catalyses Endonucleolytic cleavage at a junction such as a reciprocal single-stranded crossover between two homologous DNA duplexes (Holliday junction).. In terms of biological role, the RuvA-RuvB-RuvC complex processes Holliday junction (HJ) DNA during genetic recombination and DNA repair. Endonuclease that resolves HJ intermediates. Cleaves cruciform DNA by making single-stranded nicks across the HJ at symmetrical positions within the homologous arms, yielding a 5'-phosphate and a 3'-hydroxyl group; requires a central core of homology in the junction. The consensus cleavage sequence is 5'-(A/T)TT(C/G)-3'. Cleavage occurs on the 3'-side of the TT dinucleotide at the point of strand exchange. HJ branch migration catalyzed by RuvA-RuvB allows RuvC to scan DNA until it finds its consensus sequence, where it cleaves and resolves the cruciform DNA. The chain is Crossover junction endodeoxyribonuclease RuvC from Rickettsia massiliae (strain Mtu5).